Here is a 503-residue protein sequence, read N- to C-terminus: Adenosine deaminase 2-A (503 aa).

The N-terminal stretch at 1-24 is a signal peptide; it reads MHVLFLGDLMWIYLLLLCCASCNG. Residues His105 and His107 each coordinate Zn(2+). Residue Asp108 coordinates substrate. The N-linked (GlcNAc...) asparagine glycan is linked to Asn120. An intrachain disulfide couples Cys130 to Cys152. Residues Asn167 and Asn178 are each glycosylated (N-linked (GlcNAc...) asparagine). Substrate contacts are provided by residues 197-204 and His286; that span reads WERFEQVF. Asn290 carries N-linked (GlcNAc...) asparagine glycosylation. Gly319 contacts substrate. His349 is a binding site for Zn(2+). The active-site Proton donor is the Glu352. The N-linked (GlcNAc...) asparagine glycan is linked to Asn371. His377 (proton acceptor) is an active-site residue. Asp434 provides a ligand contact to Zn(2+). Asp435 is a binding site for substrate.

Belongs to the metallo-dependent hydrolases superfamily. Adenosine and AMP deaminases family. ADGF subfamily. Zn(2+) is required as a cofactor.

It is found in the secreted. It catalyses the reaction adenosine + H2O + H(+) = inosine + NH4(+). In terms of biological role, adenosine deaminase that may contribute to the degradation of extracellular adenosine, a signaling molecule that controls a variety of cellular responses. May play a role in the regulation of cell proliferation. The sequence is that of Adenosine deaminase 2-A from Danio rerio (Zebrafish).